The sequence spans 75 residues: Cytochrome c oxidase assembly factor 5 (75 aa).

The region spanning 28 to 66 (QHDCVVKEGKKPSECLKEGHCRSMQVAFFECKRSMLDTR) is the CHCH domain. The short motif at 31-42 (CVVKEGKKPSEC) is the Cx10C motif element. Intrachain disulfides connect Cys-31–Cys-58 and Cys-42–Cys-48. Residues 48-58 (CRSMQVAFFEC) carry the Cx9C motif motif.

The protein belongs to the PET191 family.

In terms of biological role, involved in an early step of the mitochondrial complex IV assembly process. This chain is Cytochrome c oxidase assembly factor 5 (coa5), found in Danio rerio (Zebrafish).